Consider the following 148-residue polypeptide: AYINLPGQPFDFQCPAGQVISRVSSVYDVLLEDRQWEFGCRTENVTQTCSTSGYANDFGLPLSYSCPGKKVLTGIRSYHDNQIEDRRFTFRCCDVMSKATTGCHVSEQVNQFNGPMLLEVSAGQAIKGAISQHDVAFEDRVWKFKLCK.

An intrachain disulfide couples cysteine 14 to cysteine 40. N-linked (GlcNAc...) asparagine glycosylation is present at asparagine 44. Disulfide bonds link cysteine 66–cysteine 93 and cysteine 103–cysteine 147.

The protein belongs to the dermatopontin family. The terminal mannose residues of the polysaccharide are 3-O-methylated. No tyrosine sulfation was detected.

Its subcellular location is the secreted. The protein resides in the extracellular space. The protein localises to the extracellular matrix. Functionally, seems to mediate adhesion by cell surface integrin binding. This Biomphalaria glabrata (Bloodfluke planorb) protein is Dermatopontin.